A 311-amino-acid chain; its full sequence is Malate dehydrogenase (311 aa).

Residues 7 to 13 (GAAGGIG) and aspartate 34 contribute to the NAD(+) site. Residues arginine 81 and arginine 87 each contribute to the substrate site. NAD(+)-binding positions include asparagine 94 and 117-119 (ITN). Substrate-binding residues include asparagine 119 and arginine 153. The Proton acceptor role is filled by histidine 177. Methionine 227 serves as a coordination point for NAD(+).

This sequence belongs to the LDH/MDH superfamily. MDH type 1 family. As to quaternary structure, homodimer.

It carries out the reaction (S)-malate + NAD(+) = oxaloacetate + NADH + H(+). Functionally, catalyzes the reversible oxidation of malate to oxaloacetate. In Shewanella sp. (strain ANA-3), this protein is Malate dehydrogenase.